The following is a 138-amino-acid chain: DNA-directed RNA polymerase II subunit 4 (138 aa).

N-acetylserine is present on serine 2.

The protein belongs to the eukaryotic RPB4 RNA polymerase subunit family. Component of the RNA polymerase II complex consisting of at least 12 subunits. Interacts with NRPB7.

The protein resides in the nucleus. Functionally, DNA-dependent RNA polymerase catalyzes the transcription of DNA into RNA using the four ribonucleoside triphosphates as substrates. Second largest component of RNA polymerase II which synthesizes mRNA precursors and many functional non-coding RNAs. Proposed to contribute to the polymerase catalytic activity and forms the polymerase active center together with the largest subunit. Pol II is the central component of the basal RNA polymerase II transcription machinery. It is composed of mobile elements that move relative to each other. This is DNA-directed RNA polymerase II subunit 4 (NRPB4) from Arabidopsis thaliana (Mouse-ear cress).